Here is a 572-residue protein sequence, read N- to C-terminus: MSLVRTVTIVLFIIAFLQNAAAQKRQQSIVKSRGAVATDDGRCSVIGMRVLREGGNAIDASVAAALCLGVVSPASSGIGGGAFTVVKIAGGKEIAYDSRETAPLRATENMYGGNVDLKKKGALSVGVPGEVAGLFTAWKQHGKLPWKRLVTPAEKLAEGFKISKYLYMQMNATRSDILADKGLSDLFVSNGELKKPGTICHNPKLALTLKLIGEYGPKAFYNGTVGVNLARDIKKSGGIITLKDLQSYRVKIKEPLSADILGYRVLGMPPPSSGGAAMMLVLNILSQYGIPSGVSGPLGVHRLIEALKHAFAVRMNLGDPDFTDVTKVVSDMLSPKFAKDLKSKINDQKTFDPKYYGGMWNQIDDHGTSHLSIIDRERNAVSMTSTINGYFGALMLSPSTGIVLNNEMDDFSIPMKSNGNLDVPPPAPANFIRPGKRPLSSMSPTIVLKDGKVKAAVGASGGANIIAGTTEVYLNHFFLKMDPLSSVLAPRIYHQLIPNRASYENWTTVFNDHFEIPKATRVVLEKKGHVLSPIAGGTIAQFIVQESGENSGGRSELVAVSDPRKGGFPSGY.

An N-terminal signal peptide occupies residues 1 to 22; sequence MSLVRTVTIVLFIIAFLQNAAA. R99 contacts L-glutamate. N171 and N222 each carry an N-linked (GlcNAc...) asparagine glycan. T368 (nucleophile) is an active-site residue. L-glutamate contacts are provided by residues T386, N388, E407, D410, 440-441, and 461-462; these read SS and GG. An N-linked (GlcNAc...) asparagine glycan is attached at N505. The segment at 552–572 is disordered; the sequence is GGRSELVAVSDPRKGGFPSGY.

This sequence belongs to the gamma-glutamyltransferase family. As to expression, expressed in embryo, roots and leaves. In mature plants, expression is restricted to vascular tissues of roots, leaves, flowers and siliques.

It is found in the secreted. Its subcellular location is the extracellular space. The protein resides in the apoplast. It catalyses the reaction an N-terminal (5-L-glutamyl)-[peptide] + an alpha-amino acid = 5-L-glutamyl amino acid + an N-terminal L-alpha-aminoacyl-[peptide]. It carries out the reaction glutathione + H2O = L-cysteinylglycine + L-glutamate. The catalysed reaction is an S-substituted glutathione + H2O = an S-substituted L-cysteinylglycine + L-glutamate. It participates in sulfur metabolism; glutathione metabolism. Its function is as follows. May play a role in preventing oxidative stress by metabolizing extracellular oxidized glutathione (GSSG). This is Glutathione hydrolase 1 (GGT1) from Arabidopsis thaliana (Mouse-ear cress).